A 243-amino-acid chain; its full sequence is Sugar fermentation stimulation protein homolog (243 aa).

The protein belongs to the SfsA family.

This is Sugar fermentation stimulation protein homolog from Lacticaseibacillus casei (strain BL23) (Lactobacillus casei).